Consider the following 706-residue polypeptide: Mitochondrial intermediate peptidase, mitochondrial (706 aa).

A mitochondrion-targeting transit peptide spans 1 to 29 (MWKLTRRLQPHINSTRWLVRNFRNGGAGD). The segment at 212–238 (NPTYRSTSGGSRGSTRSAHKSKQKGFR) is disordered. The segment covering 214–227 (TYRSTSGGSRGSTR) has biased composition (low complexity). His491 provides a ligand contact to Zn(2+). Glu492 is a catalytic residue. Zn(2+) is bound by residues His495 and Glu520.

This sequence belongs to the peptidase M3 family. Zn(2+) is required as a cofactor.

The protein resides in the mitochondrion. Functionally, aminopeptidase which cleaves preproteins, imported into the mitochondrion, to their mature size. Could cleave both preproteins and preprotein intermediates already cleaved by the mitochondrial processing peptidase (MPP). In Arabidopsis thaliana (Mouse-ear cress), this protein is Mitochondrial intermediate peptidase, mitochondrial.